Reading from the N-terminus, the 196-residue chain is Sulfur-rich protein (196 aa).

A run of 3 helical transmembrane segments spans residues 34–54 (VTAG…LIGW), 76–96 (ITLL…MFIF), and 105–125 (FWLI…SLCF).

The protein resides in the membrane. This Chlamydia pneumoniae (Chlamydophila pneumoniae) protein is Sulfur-rich protein (srp).